We begin with the raw amino-acid sequence, 311 residues long: Sensor histidine kinase YcbM (311 aa).

Residues 1 to 21 (MTVLWVAAVIALACLNVIQFI) form a helical membrane-spanning segment. The Cytoplasmic portion of the chain corresponds to 22-311 (MKKKRDGNLA…FTITLKRMTY (290 aa)). In terms of domain architecture, Histidine kinase spans 92-310 (NMSHDLKTPL…AFTITLKRMT (219 aa)). His-95 bears the Phosphohistidine; by autocatalysis mark.

The protein resides in the cell membrane. The catalysed reaction is ATP + protein L-histidine = ADP + protein N-phospho-L-histidine.. Functionally, member of the two-component regulatory system YcbM/YcbL. Probably activates YcbL by phosphorylation. The protein is Sensor histidine kinase YcbM (ycbM) of Bacillus subtilis (strain 168).